Reading from the N-terminus, the 81-residue chain is Insulin (81 aa).

Intrachain disulfides connect C7–C67, C19–C80, and C66–C71. A propeptide spans 33 to 58 (DVEQPLVNGPLHGEVGELPFQHEEYQ) (c peptide).

Belongs to the insulin family. Heterodimer of a B chain and an A chain linked by two disulfide bonds.

It localises to the secreted. Insulin decreases blood glucose concentration. It increases cell permeability to monosaccharides, amino acids and fatty acids. It accelerates glycolysis, the pentose phosphate cycle, and glycogen synthesis in liver. The polypeptide is Insulin (INS) (Anas platyrhynchos (Mallard)).